Consider the following 539-residue polypeptide: Glycerophosphoinositol inositolphosphodiesterase GDPD2 (539 aa).

Topologically, residues 1-38 are cytoplasmic; sequence MAESPGCCSVWARCLHCLYSCHWRKCPRERMQTSKCDC. A helical transmembrane segment spans residues 39-59; that stretch reads IWFGLLFLTFLLSLSWLYIGL. Residues 60–85 are Extracellular-facing; it reads VLLNDLHNFNEFLFRRWGHWMDWSLA. A helical membrane pass occupies residues 86 to 106; it reads FLLVISLLVTYASLLLVLALL. The Cytoplasmic segment spans residues 107–121; sequence LRLCRQPLHLHSLHK. The chain crosses the membrane as a helical span at residues 122-142; it reads VLLLLIMLLVAAGLVGLDIQW. The Extracellular portion of the chain corresponds to 143-154; that stretch reads QQEWHSLRVSLQ. The chain crosses the membrane as a helical span at residues 155-175; that stretch reads ATAPFLHIGAAAGIALLAWPV. Residues 176 to 188 are Cytoplasmic-facing; sequence ADTFYRIHRRGPK. Residues 189-209 traverse the membrane as a helical segment; it reads ILLLLLFFGVVLVIYLAPLCI. Over 210-490 the chain is Extracellular; the sequence is SSPCIMEPRD…PIWLITPQTY (281 aa). The region spanning 224-479 is the GP-PDE domain; it reads PGLVGHRGAP…NDCQLLQQMR (256 aa). Residues glutamate 256, aspartate 258, and histidine 271 each coordinate a divalent metal cation. Asparagine 442 carries an N-linked (GlcNAc...) asparagine glycan. Residues 491–511 traverse the membrane as a helical segment; that stretch reads LIIWVITNCVSTMLLLWTFLL. The Cytoplasmic portion of the chain corresponds to 512 to 539; sequence QRRFVKKRGKTGLETAVLLTRINNFMME.

Belongs to the glycerophosphoryl diester phosphodiesterase family. Requires Ca(2+) as cofactor.

Its subcellular location is the cell membrane. It is found in the cytoplasm. It localises to the cytoskeleton. The catalysed reaction is sn-glycero-3-phospho-1D-myo-inositol + H2O = 1D-myo-inositol 1-phosphate + glycerol + H(+). In terms of biological role, has glycerophosphoinositol inositolphosphodiesterase activity and specifically hydrolyzes glycerophosphoinositol, with no activity for other substrates such as glycerophosphoinositol 4-phosphate, glycerophosphocholine, glycerophosphoethanolamine, and glycerophosphoserine. Accelerates the program of osteoblast differentiation and growth. May play a role in remodeling of the actin cytoskeleton. The protein is Glycerophosphoinositol inositolphosphodiesterase GDPD2 (GDPD2) of Homo sapiens (Human).